A 205-amino-acid polypeptide reads, in one-letter code: Holliday junction branch migration complex subunit RuvA (205 aa).

The segment at 1–64 (MIGKLKGTID…EDQLRLFGFL (64 aa)) is domain I. The interval 65 to 143 (SALEREWFRL…AFAGEMSASI (79 aa)) is domain II. Residues 144–153 (GLKQELGEGV) form a flexible linker region. Residues 153–205 (VAAAPVSDAVSALTNLGYSRDQAANAVAAALKNGGEGGDSAKLIRLGLKELAR) are domain III.

Belongs to the RuvA family. As to quaternary structure, homotetramer. Forms an RuvA(8)-RuvB(12)-Holliday junction (HJ) complex. HJ DNA is sandwiched between 2 RuvA tetramers; dsDNA enters through RuvA and exits via RuvB. An RuvB hexamer assembles on each DNA strand where it exits the tetramer. Each RuvB hexamer is contacted by two RuvA subunits (via domain III) on 2 adjacent RuvB subunits; this complex drives branch migration. In the full resolvosome a probable DNA-RuvA(4)-RuvB(12)-RuvC(2) complex forms which resolves the HJ.

The protein resides in the cytoplasm. In terms of biological role, the RuvA-RuvB-RuvC complex processes Holliday junction (HJ) DNA during genetic recombination and DNA repair, while the RuvA-RuvB complex plays an important role in the rescue of blocked DNA replication forks via replication fork reversal (RFR). RuvA specifically binds to HJ cruciform DNA, conferring on it an open structure. The RuvB hexamer acts as an ATP-dependent pump, pulling dsDNA into and through the RuvAB complex. HJ branch migration allows RuvC to scan DNA until it finds its consensus sequence, where it cleaves and resolves the cruciform DNA. This is Holliday junction branch migration complex subunit RuvA from Sinorhizobium fredii (strain NBRC 101917 / NGR234).